The sequence spans 30 residues: Chassatide C3 (30 aa).

Residues 1–30 constitute a cross-link (cyclopeptide (Gly-Asn)); it reads GIPCGESCVWIPCISSALGCSCKNKVCYRN. 3 disulfide bridges follow: C4–C20, C8–C22, and C13–C27.

This is a cyclic peptide. Expressed in fruit, pedicel, stem and root but not in leaf (at protein level).

Functionally, probably participates in a plant defense mechanism. The sequence is that of Chassatide C3 from Chassalia chartacea (Chassalia curviflora).